Consider the following 284-residue polypeptide: Bifunctional protein FolD (284 aa).

NADP(+) is bound by residues 165–167 (GRS), Ser-190, and Ile-231.

Belongs to the tetrahydrofolate dehydrogenase/cyclohydrolase family. Homodimer.

It catalyses the reaction (6R)-5,10-methylene-5,6,7,8-tetrahydrofolate + NADP(+) = (6R)-5,10-methenyltetrahydrofolate + NADPH. The enzyme catalyses (6R)-5,10-methenyltetrahydrofolate + H2O = (6R)-10-formyltetrahydrofolate + H(+). It functions in the pathway one-carbon metabolism; tetrahydrofolate interconversion. Functionally, catalyzes the oxidation of 5,10-methylenetetrahydrofolate to 5,10-methenyltetrahydrofolate and then the hydrolysis of 5,10-methenyltetrahydrofolate to 10-formyltetrahydrofolate. The chain is Bifunctional protein FolD from Streptococcus thermophilus (strain ATCC BAA-250 / LMG 18311).